The sequence spans 359 residues: Membrane-bound lytic murein transglycosylase C (359 aa).

Residues 1–16 (MKKYLALALIAPLLIS) form the signal peptide. Cys17 carries the N-palmitoyl cysteine lipid modification. The S-diacylglycerol cysteine moiety is linked to residue Cys17.

It belongs to the transglycosylase Slt family.

Its subcellular location is the cell outer membrane. The catalysed reaction is Exolytic cleavage of the (1-&gt;4)-beta-glycosidic linkage between N-acetylmuramic acid (MurNAc) and N-acetylglucosamine (GlcNAc) residues in peptidoglycan, from either the reducing or the non-reducing ends of the peptidoglycan chains, with concomitant formation of a 1,6-anhydrobond in the MurNAc residue.. Murein-degrading enzyme. May play a role in recycling of muropeptides during cell elongation and/or cell division. This is Membrane-bound lytic murein transglycosylase C from Shigella flexneri serotype 5b (strain 8401).